Consider the following 444-residue polypeptide: E1B 55 kDa protein (444 aa).

A disordered region spans residues 1–27 (MEQDSDLESGRATNQRPPRVRVRGAGV). Ser438 and Ser439 each carry phosphoserine.

Belongs to the adenoviridae E1B 55 kDa protein family. Interacts with host PML-4 and PML-5; this interaction promotes efficient subnuclear targeting of E1B-55K to PML nuclear bodies. Interacts with E4-ORF3 protein. Interacts with E4-ORF6 protein.

The protein localises to the host nucleus. It localises to the host cytoplasm. Functionally, plays a major role to prevent cellular inhibition of viral genome replication. Assembles an SCF-like E3 ubiquitin ligase complex based on the cellular proteins ELOB, ELOC, CUL5 and RBX1, in cooperation with viral E4orf6. This viral RING-type ligase ubiquitinates cellular substrates and targets them to proteasomal degradation: TP53/p53, LIG4, MRE11-RAD50-NBS1 (MRN) complex, ITGA3, DAXX and BLM. E1B-55K probably acts as the substrate-specific adapter of the SCF-like E3 ubiquitin ligase complex. Degradation of host TP53/p53 activity is essential for preventing E1A-induced TP53 accumulation that would otherwise lead to cell apoptosis and growth arrest. E1B-55K also inactivates TP53 transcription-factor activity by binding its transactivation domain. E1B-55K also functions as a SUMO1 E3 ligase for TP53 which causes the latter to be sequestered in promyelocytic leukemia (PML) nuclear bodies thereby contributing to maximal inhibition of TP53 function. This chain is E1B 55 kDa protein, found in Canis lupus familiaris (Dog).